The following is a 431-amino-acid chain: Enolase (431 aa).

Residue Q167 participates in (2R)-2-phosphoglycerate binding. The active-site Proton donor is the E209. The Mg(2+) site is built by D246, E289, and D316. Residues K341, R370, S371, and K392 each coordinate (2R)-2-phosphoglycerate. The active-site Proton acceptor is the K341.

This sequence belongs to the enolase family. As to quaternary structure, component of the RNA degradosome, a multiprotein complex involved in RNA processing and mRNA degradation. It depends on Mg(2+) as a cofactor.

Its subcellular location is the cytoplasm. It is found in the secreted. The protein resides in the cell surface. It carries out the reaction (2R)-2-phosphoglycerate = phosphoenolpyruvate + H2O. It functions in the pathway carbohydrate degradation; glycolysis; pyruvate from D-glyceraldehyde 3-phosphate: step 4/5. Its function is as follows. Catalyzes the reversible conversion of 2-phosphoglycerate (2-PG) into phosphoenolpyruvate (PEP). It is essential for the degradation of carbohydrates via glycolysis. This is Enolase from Shewanella sediminis (strain HAW-EB3).